The chain runs to 212 residues: uncharacterized protein (212 aa).

Positions 53, 74, and 97 each coordinate S-adenosyl-L-methionine.

This sequence belongs to the methyltransferase superfamily. YrrT family.

Functionally, could be a S-adenosyl-L-methionine-dependent methyltransferase. This is an uncharacterized protein from Bacillus cereus (strain ATCC 10987 / NRS 248).